We begin with the raw amino-acid sequence, 424 residues long: Inhibin beta A chain (424 aa).

Residues 1–20 (MPLLWKRGFLLVICWIIVRS) form the signal peptide. Residues 21–308 (SPTPGSEGHS…EDRQHRRRER (288 aa)) constitute a propeptide that is removed on maturation. Residue Asn-165 is glycosylated (N-linked (GlcNAc...) asparagine). 2 disordered regions span residues 178–200 (QQRQ…LKGE) and 260–288 (KKKK…QSHR). Basic and acidic residues predominate over residues 263 to 275 (KEDDGEGKEKDGG). Disulfide bonds link Cys-312/Cys-320, Cys-319/Cys-389, Cys-348/Cys-421, and Cys-352/Cys-423.

It belongs to the TGF-beta family. Dimeric, linked by one or more disulfide bonds. Inhibin A is a dimer of alpha and beta-A. Inhibin B is a dimer of alpha and beta-B. Activin A is a homodimer of beta-A. Activin B is a homodimer of beta-B. Activin AB is a dimer of beta-A and beta-B. In terms of tissue distribution, ciliary ganglion neurons. Levels are higher in the choroid than the iris.

Its subcellular location is the secreted. Functionally, inhibins and activins inhibit and activate, respectively, the secretion of follitropin by the pituitary gland. Inhibins/activins are involved in regulating a number of diverse functions such as hypothalamic and pituitary hormone secretion, gonadal hormone secretion, germ cell development and maturation, erythroid differentiation, insulin secretion, nerve cell survival, embryonic axial development or bone growth, depending on their subunit composition. Inhibins appear to oppose the functions of activins. Induces somatostatin in the ciliary ganglion neurons and may play a role in regulating neurotransmitter phenotype. The chain is Inhibin beta A chain (INHBA) from Gallus gallus (Chicken).